We begin with the raw amino-acid sequence, 507 residues long: ATP synthase subunit alpha, chloroplastic (507 aa).

170–177 (GDRQTGKT) lines the ATP pocket.

Belongs to the ATPase alpha/beta chains family. F-type ATPases have 2 components, CF(1) - the catalytic core - and CF(0) - the membrane proton channel. CF(1) has five subunits: alpha(3), beta(3), gamma(1), delta(1), epsilon(1). CF(0) has four main subunits: a, b, b' and c.

The protein resides in the plastid. Its subcellular location is the chloroplast thylakoid membrane. The catalysed reaction is ATP + H2O + 4 H(+)(in) = ADP + phosphate + 5 H(+)(out). In terms of biological role, produces ATP from ADP in the presence of a proton gradient across the membrane. The alpha chain is a regulatory subunit. This is ATP synthase subunit alpha, chloroplastic from Tetradesmus obliquus (Green alga).